A 267-amino-acid polypeptide reads, in one-letter code: 4-hydroxy-tetrahydrodipicolinate reductase (267 aa).

Residues 8–13 (GIAGRM), E34, 98–100 (GST), and 122–125 (SPNM) each bind NAD(+). The active-site Proton donor/acceptor is the H155. H156 provides a ligand contact to (S)-2,3,4,5-tetrahydrodipicolinate. Residue K159 is the Proton donor of the active site. 165–166 (GT) serves as a coordination point for (S)-2,3,4,5-tetrahydrodipicolinate.

Belongs to the DapB family.

It is found in the cytoplasm. It catalyses the reaction (S)-2,3,4,5-tetrahydrodipicolinate + NAD(+) + H2O = (2S,4S)-4-hydroxy-2,3,4,5-tetrahydrodipicolinate + NADH + H(+). The enzyme catalyses (S)-2,3,4,5-tetrahydrodipicolinate + NADP(+) + H2O = (2S,4S)-4-hydroxy-2,3,4,5-tetrahydrodipicolinate + NADPH + H(+). Its pathway is amino-acid biosynthesis; L-lysine biosynthesis via DAP pathway; (S)-tetrahydrodipicolinate from L-aspartate: step 4/4. Its function is as follows. Catalyzes the conversion of 4-hydroxy-tetrahydrodipicolinate (HTPA) to tetrahydrodipicolinate. This chain is 4-hydroxy-tetrahydrodipicolinate reductase, found in Syntrophobacter fumaroxidans (strain DSM 10017 / MPOB).